Here is a 352-residue protein sequence, read N- to C-terminus: Spermidine/putrescine import ATP-binding protein PotA (352 aa).

One can recognise an ABC transporter domain in the interval 7–237; that stretch reads IRLENVTKSF…PVNAFVADFI (231 aa). 39 to 46 contributes to the ATP binding site; that stretch reads GPSGCGKT.

It belongs to the ABC transporter superfamily. Spermidine/putrescine importer (TC 3.A.1.11.1) family. In terms of assembly, the complex is composed of two ATP-binding proteins (PotA), two transmembrane proteins (PotB and PotC) and a solute-binding protein (PotD).

It localises to the cell membrane. The enzyme catalyses ATP + H2O + polyamine-[polyamine-binding protein]Side 1 = ADP + phosphate + polyamineSide 2 + [polyamine-binding protein]Side 1.. In terms of biological role, part of the ABC transporter complex PotABCD involved in spermidine/putrescine import. Responsible for energy coupling to the transport system. This is Spermidine/putrescine import ATP-binding protein PotA from Acetivibrio thermocellus (strain ATCC 27405 / DSM 1237 / JCM 9322 / NBRC 103400 / NCIMB 10682 / NRRL B-4536 / VPI 7372) (Clostridium thermocellum).